A 255-amino-acid polypeptide reads, in one-letter code: Small ribosomal subunit protein uS2 (255 aa).

The protein belongs to the universal ribosomal protein uS2 family.

This is Small ribosomal subunit protein uS2 from Geotalea daltonii (strain DSM 22248 / JCM 15807 / FRC-32) (Geobacter daltonii).